Consider the following 649-residue polypeptide: Threonine--tRNA ligase (649 aa).

In terms of domain architecture, TGS spans 1-60 (MHVTLPDGKQLDLQPGATALDAAKAIGPRLAQDALGATANGELTDLMTPLSDGASITLIT). The catalytic stretch occupies residues 248–544 (DHRKLGKELE…LIEHYAGDFP (297 aa)). Positions 341, 392, and 521 each coordinate Zn(2+).

This sequence belongs to the class-II aminoacyl-tRNA synthetase family. As to quaternary structure, homodimer. Zn(2+) is required as a cofactor.

Its subcellular location is the cytoplasm. The enzyme catalyses tRNA(Thr) + L-threonine + ATP = L-threonyl-tRNA(Thr) + AMP + diphosphate + H(+). Functionally, catalyzes the attachment of threonine to tRNA(Thr) in a two-step reaction: L-threonine is first activated by ATP to form Thr-AMP and then transferred to the acceptor end of tRNA(Thr). Also edits incorrectly charged L-seryl-tRNA(Thr). The protein is Threonine--tRNA ligase of Deinococcus radiodurans (strain ATCC 13939 / DSM 20539 / JCM 16871 / CCUG 27074 / LMG 4051 / NBRC 15346 / NCIMB 9279 / VKM B-1422 / R1).